Consider the following 151-residue polypeptide: Transcription antitermination protein NusB (151 aa).

It belongs to the NusB family.

In terms of biological role, involved in transcription antitermination. Required for transcription of ribosomal RNA (rRNA) genes. Binds specifically to the boxA antiterminator sequence of the ribosomal RNA (rrn) operons. This chain is Transcription antitermination protein NusB, found in Photobacterium profundum (strain SS9).